The following is a 395-amino-acid chain: Phosphoprotein (395 aa).

2 disordered regions span residues 31–109 and 126–214; these read VETV…DTQL and NKSS…PASV. A compositionally biased stretch (basic and acidic residues) spans 65–74; that stretch reads TPDRQNRSDK. Polar residues-rich tracts occupy residues 75-98, 146-168, and 203-212; these read QPST…QPPT, LPTQ…QNRA, and SGQSQDNTPA. Residues 222–285 are multimerization; that stretch reads DFVQAMMSMM…LGMMKILDPG (64 aa).

It belongs to the rubulavirus/avulavirus P protein family. As to quaternary structure, homotetramer. Interacts (via multimerization domain) with polymerase L; this interaction forms the polymerase L-P complex. Interacts (via N-terminus) with N0 (via Ncore); this interaction allows P to chaperon N0 to avoid N polymerization before encapsidation. Interacts (via C-terminus) with N-RNA template; this interaction positions the polymerase on the template for both transcription and replication.

In terms of biological role, essential cofactor of the RNA polymerase L that plays a central role in the transcription and replication by forming the polymerase complex with RNA polymerase L and recruiting L to the genomic N-RNA template for RNA synthesis. Also plays a central role in the encapsidation of nascent RNA chains by forming the encapsidation complex with the nucleocapsid protein N (N-P complex). Acts as a chaperone for newly synthesized free N protein, so-called N0, allowing encapsidation of nascent RNA chains during replication. The nucleoprotein protein N prevents excessive phosphorylation of P, which leads to down-regulation of viral transcription/ replication. Participates, together with N, in the formation of viral factories (viroplasms), which are large inclusions in the host cytoplasm where replication takes place. The sequence is that of Phosphoprotein (P/C) from Gallus gallus (Chicken).